The sequence spans 445 residues: Putative serpin-Z5 (445 aa).

The segment at 356-380 (GTEAAASAINMVCGMSMTPEPRPVP) is RCL.

This sequence belongs to the serpin family.

Functionally, probable serine protease inhibitor. The protein is Putative serpin-Z5 of Oryza sativa subsp. japonica (Rice).